We begin with the raw amino-acid sequence, 944 residues long: 2-oxoglutarate dehydrogenase E1 component (944 aa).

Residues S918 to N944 are disordered. The segment covering P925 to V936 has biased composition (basic and acidic residues).

It belongs to the alpha-ketoglutarate dehydrogenase family. As to quaternary structure, homodimer. Part of the 2-oxoglutarate dehydrogenase (OGDH) complex composed of E1 (2-oxoglutarate dehydrogenase), E2 (dihydrolipoamide succinyltransferase) and E3 (dihydrolipoamide dehydrogenase); the complex contains multiple copies of the three enzymatic components (E1, E2 and E3). It depends on thiamine diphosphate as a cofactor.

The enzyme catalyses N(6)-[(R)-lipoyl]-L-lysyl-[protein] + 2-oxoglutarate + H(+) = N(6)-[(R)-S(8)-succinyldihydrolipoyl]-L-lysyl-[protein] + CO2. E1 component of the 2-oxoglutarate dehydrogenase (OGDH) complex which catalyzes the decarboxylation of 2-oxoglutarate, the first step in the conversion of 2-oxoglutarate to succinyl-CoA and CO(2). This chain is 2-oxoglutarate dehydrogenase E1 component, found in Bacillus pumilus (strain SAFR-032).